The chain runs to 77 residues: Small ribosomal subunit protein bS21 (77 aa).

This sequence belongs to the bacterial ribosomal protein bS21 family.

The chain is Small ribosomal subunit protein bS21 from Bartonella tribocorum (strain CIP 105476 / IBS 506).